A 128-amino-acid polypeptide reads, in one-letter code: Small ribosomal subunit protein uS9 (128 aa).

This sequence belongs to the universal ribosomal protein uS9 family. As to quaternary structure, part of the 30S ribosomal subunit. Contacts proteins S7 and S10.

Its function is as follows. Part of the top of the head of the 30S subunit. The C-terminal region penetrates the head emerging in the P-site where it contacts tRNA. The protein is Small ribosomal subunit protein uS9 (rpsI) of Thermus thermophilus (strain ATCC BAA-163 / DSM 7039 / HB27).